The sequence spans 510 residues: Putative thymidine phosphorylase (510 aa).

This sequence belongs to the thymidine/pyrimidine-nucleoside phosphorylase family. Type 2 subfamily.

The catalysed reaction is thymidine + phosphate = 2-deoxy-alpha-D-ribose 1-phosphate + thymine. The sequence is that of Putative thymidine phosphorylase from Nitrobacter hamburgensis (strain DSM 10229 / NCIMB 13809 / X14).